The chain runs to 481 residues: Thyroid receptor-interacting protein 6 (481 aa).

Residues 1-12 show a composition bias toward pro residues; that stretch reads MSGPTWLPPKQP. A disordered region spans residues 1-259; sequence MSGPTWLPPK…QVPLSQPPEE (259 aa). Arg-25 is subject to Asymmetric dimethylarginine; alternate. Arg-25 is modified (omega-N-methylarginine; alternate). Residue Tyr-55 is modified to Phosphotyrosine; by SRC. The residue at position 92 (Ser-92) is a Phosphoserine. Positions 108 to 122 are enriched in basic and acidic residues; the sequence is DGGRGHAPRRPDRQA. Arg-111 carries the post-translational modification Omega-N-methylarginine. Low complexity-rich tracts occupy residues 153–173 and 183–193; these read SPYG…AGPA and PVRGCGPPRRG. Arg-185 and Arg-192 each carry omega-N-methylarginine. Ser-195 carries the post-translational modification Phosphoserine. Position 211 is an omega-N-methylarginine (Arg-211). The segment covering 221-233 has biased composition (basic and acidic residues); sequence SHREPGPGVKEEA. An Omega-N-methylarginine modification is found at Arg-243. Ser-254 bears the Phosphoserine mark. LIM zinc-binding domains lie at 284–321, 344–403, and 404–472; these read CGGC…QLRG, CSTC…FAPR, and CSVC…RIQE. The interaction with MAGI1 and PTPN13 stretch occupies residues 474 to 481; the sequence is SATVTTDC.

Belongs to the zyxin/ajuba family. As to quaternary structure, specifically interacts with the ligand binding domain of the thyroid receptor (TR) in the presence of thyroid hormone. Interacts (via the third LIM domain and C-terminus) with PTPN13 (via the second PDZ domain). Interacts (via the second LIM domain or via the third LIM domain plus C-terminus) with PDLIM4 (via PDZ domain). Found in a complex with PTPN13 and PDLIM4. Interacts with SVIL isoform 2. Interacts with LPAR2 but not other LPA receptors. Interacts with PRKAA2. Interacts with MAGI1. Interacts with SCRIB. In terms of processing, phosphorylation at Tyr-55 by SRC is required for enhancement of lysophosphatidic acid-induced cell migration. Tyr-55 is dephosphorylated by PTPN13.

The protein localises to the cytoplasm. Its subcellular location is the cytoskeleton. It is found in the cell junction. It localises to the focal adhesion. The protein resides in the nucleus. Its function is as follows. Relays signals from the cell surface to the nucleus to weaken adherens junction and promote actin cytoskeleton reorganization and cell invasiveness. Involved in lysophosphatidic acid-induced cell adhesion and migration. Acts as a transcriptional coactivator for NF-kappa-B and JUN, and mediates the transrepression of these transcription factors induced by glucocorticoid receptor. The chain is Thyroid receptor-interacting protein 6 (TRIP6) from Bos taurus (Bovine).